The chain runs to 375 residues: Chaperone protein DnaJ (375 aa).

A J domain is found at 5–70 (GYYEVLGVSK…QKRQAYDQFG (66 aa)). The CR-type zinc finger occupies 142–220 (GKEYKIEIPR…CKGEGLTEKR (79 aa)). Positions 155, 158, 172, 175, 194, 197, 208, and 211 each coordinate Zn(2+). CXXCXGXG motif repeat units lie at residues 155-162 (CVDCTGSG), 172-179 (CPDCSGTG), 194-201 (CPRCKGKG), and 208-215 (CKTCKGEG).

This sequence belongs to the DnaJ family. Homodimer. Zn(2+) is required as a cofactor.

Its subcellular location is the cytoplasm. Participates actively in the response to hyperosmotic and heat shock by preventing the aggregation of stress-denatured proteins and by disaggregating proteins, also in an autonomous, DnaK-independent fashion. Unfolded proteins bind initially to DnaJ; upon interaction with the DnaJ-bound protein, DnaK hydrolyzes its bound ATP, resulting in the formation of a stable complex. GrpE releases ADP from DnaK; ATP binding to DnaK triggers the release of the substrate protein, thus completing the reaction cycle. Several rounds of ATP-dependent interactions between DnaJ, DnaK and GrpE are required for fully efficient folding. Also involved, together with DnaK and GrpE, in the DNA replication of plasmids through activation of initiation proteins. The chain is Chaperone protein DnaJ from Leptospira biflexa serovar Patoc (strain Patoc 1 / Ames).